The following is a 199-amino-acid chain: Holliday junction branch migration complex subunit RuvA (199 aa).

A domain I region spans residues 1-64; sequence MIALLTGKLA…EDAINLYGFR (64 aa). The segment at 65 to 143 is domain II; it reads TQQEKELFQL…KLGLAQPQAG (79 aa). The segment at 144–148 is flexible linker; the sequence is GATAP. The domain III stretch occupies residues 149–199; it reads AKQEIRDDVLSALINLGYKEAVVQKALAELKVTEDATVELVLKQALKILMK.

This sequence belongs to the RuvA family. In terms of assembly, homotetramer. Forms an RuvA(8)-RuvB(12)-Holliday junction (HJ) complex. HJ DNA is sandwiched between 2 RuvA tetramers; dsDNA enters through RuvA and exits via RuvB. An RuvB hexamer assembles on each DNA strand where it exits the tetramer. Each RuvB hexamer is contacted by two RuvA subunits (via domain III) on 2 adjacent RuvB subunits; this complex drives branch migration. In the full resolvosome a probable DNA-RuvA(4)-RuvB(12)-RuvC(2) complex forms which resolves the HJ.

It is found in the cytoplasm. Functionally, the RuvA-RuvB-RuvC complex processes Holliday junction (HJ) DNA during genetic recombination and DNA repair, while the RuvA-RuvB complex plays an important role in the rescue of blocked DNA replication forks via replication fork reversal (RFR). RuvA specifically binds to HJ cruciform DNA, conferring on it an open structure. The RuvB hexamer acts as an ATP-dependent pump, pulling dsDNA into and through the RuvAB complex. HJ branch migration allows RuvC to scan DNA until it finds its consensus sequence, where it cleaves and resolves the cruciform DNA. The chain is Holliday junction branch migration complex subunit RuvA from Geobacter sp. (strain M21).